A 97-amino-acid polypeptide reads, in one-letter code: MASTLCCIAPLIYLVFGVSSTWLIGLGEYDYLRIPMLIISLCAFAYGFWLLMFSKKIICSKYISRKKLIVLYWIVFIVMIFFLTYPTILPWILELAN.

Transmembrane regions (helical) follow at residues 7–27 (CIAP…IGLG), 34–54 (IPML…LMFS), and 69–89 (IVLY…PTIL).

The protein localises to the cell membrane. This is an uncharacterized protein from Haemophilus influenzae (strain ATCC 51907 / DSM 11121 / KW20 / Rd).